The chain runs to 427 residues: Peptidase B (427 aa).

Mn(2+) contacts are provided by lysine 195 and aspartate 200. Lysine 207 is a catalytic residue. Mn(2+)-binding residues include aspartate 218, aspartate 277, and glutamate 279. Arginine 281 is a catalytic residue.

It belongs to the peptidase M17 family. Homohexamer. Mn(2+) serves as cofactor.

Its subcellular location is the cytoplasm. It catalyses the reaction Release of an N-terminal amino acid, Xaa, from a peptide or arylamide. Xaa is preferably Glu or Asp but may be other amino acids, including Leu, Met, His, Cys and Gln.. Its function is as follows. Probably plays an important role in intracellular peptide degradation. This Salmonella typhi protein is Peptidase B.